A 204-amino-acid polypeptide reads, in one-letter code: MGAYKYVSELWRKKQSDVMRFLQRVRCWEYRQQPSIVRLVRPTRPDKARRLGYKAKQGFVVYRVRVRRGGRKRPVPKGIVYGKPTNQGVTQLKFQRSKRSVAEERAGRKLGGLRVVNSYWLNEDSTYKYYEIILVDPAHNAVRNDPRINWICNPVHKHRELRGLTSEGKKNRGLRGKGHNNHKNRPSRRATWKKNNSLSLRRYR.

Residues 161–204 (LRGLTSEGKKNRGLRGKGHNNHKNRPSRRATWKKNNSLSLRRYR) form a disordered region. Positions 171–192 (NRGLRGKGHNNHKNRPSRRATW) are enriched in basic residues. Over residues 193 to 204 (KKNNSLSLRRYR) the composition is skewed to polar residues.

The protein belongs to the eukaryotic ribosomal protein eL15 family.

The polypeptide is Large ribosomal subunit protein eL15z (RPL15A) (Arabidopsis thaliana (Mouse-ear cress)).